The chain runs to 397 residues: Glia-derived nexin (397 aa).

The N-terminal stretch at 1–19 is a signal peptide; that stretch reads MNWHFPFFILTTVTLYSVH. Asn159 is a glycosylation site (N-linked (GlcNAc...) asparagine).

The protein belongs to the serpin family. In terms of tissue distribution, most abundant in seminal vesicles.

It localises to the secreted. It is found in the extracellular space. Functionally, serine protease inhibitor with activity toward thrombin, trypsin, and urokinase. Promotes neurite extension by inhibiting thrombin. Binds heparin. In Mus musculus (Mouse), this protein is Glia-derived nexin (Serpine2).